The following is a 209-amino-acid chain: Small ribosomal subunit protein uS4 (209 aa).

Residues 98–164 form the S4 RNA-binding domain; it reads RRLDNVVYRL…LPVKNAIELN (67 aa).

The protein belongs to the universal ribosomal protein uS4 family. As to quaternary structure, part of the 30S ribosomal subunit. Contacts protein S5. The interaction surface between S4 and S5 is involved in control of translational fidelity.

Its function is as follows. One of the primary rRNA binding proteins, it binds directly to 16S rRNA where it nucleates assembly of the body of the 30S subunit. In terms of biological role, with S5 and S12 plays an important role in translational accuracy. This chain is Small ribosomal subunit protein uS4, found in Thermosipho africanus (strain TCF52B).